A 269-amino-acid polypeptide reads, in one-letter code: 4-hydroxy-tetrahydrodipicolinate reductase (269 aa).

NAD(+) is bound by residues 11-16 and E37; that span reads GASGRM. Residue R38 participates in NADP(+) binding. Residues 101 to 103 and 125 to 128 each bind NAD(+); these read GTT and AGNM. H158 serves as the catalytic Proton donor/acceptor. (S)-2,3,4,5-tetrahydrodipicolinate is bound at residue H159. K162 serves as the catalytic Proton donor. (S)-2,3,4,5-tetrahydrodipicolinate is bound at residue 168-169; the sequence is GT.

The protein belongs to the DapB family.

The protein localises to the cytoplasm. The catalysed reaction is (S)-2,3,4,5-tetrahydrodipicolinate + NAD(+) + H2O = (2S,4S)-4-hydroxy-2,3,4,5-tetrahydrodipicolinate + NADH + H(+). The enzyme catalyses (S)-2,3,4,5-tetrahydrodipicolinate + NADP(+) + H2O = (2S,4S)-4-hydroxy-2,3,4,5-tetrahydrodipicolinate + NADPH + H(+). It participates in amino-acid biosynthesis; L-lysine biosynthesis via DAP pathway; (S)-tetrahydrodipicolinate from L-aspartate: step 4/4. Functionally, catalyzes the conversion of 4-hydroxy-tetrahydrodipicolinate (HTPA) to tetrahydrodipicolinate. In Ruegeria sp. (strain TM1040) (Silicibacter sp.), this protein is 4-hydroxy-tetrahydrodipicolinate reductase.